A 133-amino-acid polypeptide reads, in one-letter code: Small ribosomal subunit protein uS8 (133 aa).

Belongs to the universal ribosomal protein uS8 family. Part of the 30S ribosomal subunit. Contacts proteins S5 and S12.

One of the primary rRNA binding proteins, it binds directly to 16S rRNA central domain where it helps coordinate assembly of the platform of the 30S subunit. The polypeptide is Small ribosomal subunit protein uS8 (Lachnoclostridium phytofermentans (strain ATCC 700394 / DSM 18823 / ISDg) (Clostridium phytofermentans)).